Reading from the N-terminus, the 246-residue chain is Envelope glycoprotein L (246 aa).

An N-terminal signal peptide occupies residues 1–19 (MKTNIFFIFLISILNQIYA). One can recognise a gL betaherpesvirus-type domain in the interval 29-235 (LEQECIKNIL…EKYNEVLPFR (207 aa)). Cysteine 134 and cysteine 139 form a disulfide bridge.

This sequence belongs to the herpesviridae glycoprotein L (gL) family. Betaherpesvirinae gL subfamily. In terms of assembly, interacts with glycoprotein H (gH); this interaction is necessary for the correct processing and cell surface expression of gH.

It is found in the virion membrane. The protein resides in the host cell membrane. It localises to the host Golgi apparatus. Its subcellular location is the host trans-Golgi network. In terms of biological role, the heterodimer glycoprotein H-glycoprotein L is required for the fusion of viral and plasma membranes leading to virus entry into the host cell. Acts as a functional inhibitor of gH and maintains gH in an inhibited form. Upon binding to host integrins, gL dissociates from gH leading to activation of the viral fusion glycoproteins gB and gH. The polypeptide is Envelope glycoprotein L (Homo sapiens (Human)).